Here is a 336-residue protein sequence, read N- to C-terminus: Phenylalanine--tRNA ligase alpha subunit (336 aa).

Glutamate 259 lines the Mg(2+) pocket.

The protein belongs to the class-II aminoacyl-tRNA synthetase family. Phe-tRNA synthetase alpha subunit type 1 subfamily. In terms of assembly, tetramer of two alpha and two beta subunits. Requires Mg(2+) as cofactor.

It localises to the cytoplasm. The catalysed reaction is tRNA(Phe) + L-phenylalanine + ATP = L-phenylalanyl-tRNA(Phe) + AMP + diphosphate + H(+). In Tropheryma whipplei (strain Twist) (Whipple's bacillus), this protein is Phenylalanine--tRNA ligase alpha subunit.